We begin with the raw amino-acid sequence, 311 residues long: MKHLTVKALVLQFNDCIQLIDGKNNIDNVITIPGLKRSVFELLGLFCKPIGSVAILGKREFIFLNQKPVEQQKKIIANLLKLKPPAVILTKSFLDCGVLLAVNQTYQVPILKTNLFSTELSFTVETYINEQFATVQKLHGVLLEIFGVGVFLEGKSGIGKSESALDLINKNHLLIGDDAIEIYRLGNRLFGRAQALAKGFMEIRGLGIINIERAYGLQITKEQTEIQLAISLLSLEEKNNASFERLGSDLKLKNLLGVKISYYQIPISSGRKTSEIIESAVIDFKLKKSGYNSANEFILKQRAMLEEQTDE.

Active-site residues include His-139 and Lys-160. 154 to 161 lines the ATP pocket; that stretch reads GKSGIGKS. Ser-161 contributes to the Mg(2+) binding site. The Proton acceptor; for phosphorylation activity. Proton donor; for dephosphorylation activity role is filled by Asp-178. Residues 201-210 form an important for the catalytic mechanism of both phosphorylation and dephosphorylation region; the sequence is MEIRGLGIIN. Glu-202 serves as a coordination point for Mg(2+). The active site involves Arg-245. An important for the catalytic mechanism of dephosphorylation region spans residues 266 to 271; it reads PISSGR.

Belongs to the HPrK/P family. As to quaternary structure, homohexamer. The cofactor is Mg(2+).

It carries out the reaction [HPr protein]-L-serine + ATP = [HPr protein]-O-phospho-L-serine + ADP + H(+). The catalysed reaction is [HPr protein]-O-phospho-L-serine + phosphate + H(+) = [HPr protein]-L-serine + diphosphate. Its function is as follows. Catalyzes the ATP- as well as the pyrophosphate-dependent phosphorylation of a specific serine residue in HPr, a phosphocarrier protein of the phosphoenolpyruvate-dependent sugar phosphotransferase system (PTS). HprK/P also catalyzes the pyrophosphate-producing, inorganic phosphate-dependent dephosphorylation (phosphorolysis) of seryl-phosphorylated HPr (P-Ser-HPr). The sequence is that of HPr kinase/phosphorylase (hprK) from Mycoplasma genitalium (strain ATCC 33530 / DSM 19775 / NCTC 10195 / G37) (Mycoplasmoides genitalium).